A 307-amino-acid chain; its full sequence is Non-homologous end joining protein Ku (307 aa).

In terms of domain architecture, Ku spans 11 to 179 (LSFGLVSIPV…EVRSMKDLNI (169 aa)). Low complexity-rich tracts occupy residues 257–267 (RGGAKAKPAAA) and 290–307 (ARAPKSPAEAPAKVRARK). Residues 257–307 (RGGAKAKPAAAPRRKAPEPVAGMAEATRARKPAARAPKSPAEAPAKVRARK) form a disordered region.

It belongs to the prokaryotic Ku family. As to quaternary structure, homodimer. Interacts with LigD.

Functionally, with LigD forms a non-homologous end joining (NHEJ) DNA repair enzyme, which repairs dsDNA breaks with reduced fidelity. Binds linear dsDNA with 5'- and 3'- overhangs but not closed circular dsDNA nor ssDNA. Recruits and stimulates the ligase activity of LigD. The protein is Non-homologous end joining protein Ku of Paraburkholderia phymatum (strain DSM 17167 / CIP 108236 / LMG 21445 / STM815) (Burkholderia phymatum).